A 68-amino-acid polypeptide reads, in one-letter code: Protein SlyX homolog (68 aa).

Belongs to the SlyX family.

The sequence is that of Protein SlyX homolog from Brucella abortus (strain S19).